We begin with the raw amino-acid sequence, 222 residues long: FCS-Like Zinc finger 13 (222 aa).

Residues 149–192 (EFLSSCCLCKKKLQGKDIYMYKGEMGFCSAECRSVQIMNDERQE) form an FLZ-type zinc finger.

Belongs to the FLZ family. As to quaternary structure, interacts with KIN10 and KIN11 via its FLZ-type zinc finger domain. Interacts with KINB1, KINB2, KINB3 and SNF4 via its N-terminal part.

The protein resides in the nucleus. It localises to the cytoplasm. Functionally, may act as an adapter to facilitate the interaction of SnRK1 complex with effector proteins, conferring tissue- and stimulus-type specific differences in the SnRK1 regulation pathway. The chain is FCS-Like Zinc finger 13 from Arabidopsis thaliana (Mouse-ear cress).